Here is a 219-residue protein sequence, read N- to C-terminus: 2-phospho-L-lactate guanylyltransferase (219 aa).

Belongs to the CofC family. Homodimer.

It carries out the reaction (2S)-2-phospholactate + GTP + H(+) = (2S)-lactyl-2-diphospho-5'-guanosine + diphosphate. It functions in the pathway cofactor biosynthesis; coenzyme F420 biosynthesis. Functionally, guanylyltransferase that catalyzes the activation of (2S)-2-phospholactate (2-PL) as (2S)-lactyl-2-diphospho-5'-guanosine, via the condensation of 2-PL with GTP. It is involved in the biosynthesis of coenzyme F420, a hydride carrier cofactor. In Methanocella arvoryzae (strain DSM 22066 / NBRC 105507 / MRE50), this protein is 2-phospho-L-lactate guanylyltransferase.